Consider the following 409-residue polypeptide: Phosphatidylserine decarboxylase proenzyme, mitochondrial (409 aa).

A mitochondrion-targeting transit peptide spans 1–52; it reads MATSVGHRCLGLLHGVAPWRSSLHPCEITALSQSLQPLRKLPFRAFRTDARK. Positions 36–103 are necessary for localization to both lipid droplets and mitochondria; it reads QPLRKLPFRA…LGLEIPPKLA (68 aa). Residues 53–63 are Mitochondrial matrix-facing; that stretch reads IHTAPARTMFL. The helical transmembrane segment at 64-82 threads the bilayer; that stretch reads LRPLPILLVTGGGYAGYRQ. The Mitochondrial intermembrane portion of the chain corresponds to 83–409; that stretch reads YEKYRERELE…IRFGEALGSL (327 aa). Residues D191, H267, and S378 each act as charge relay system; for autoendoproteolytic cleavage activity in the active site. The active-site Schiff-base intermediate with substrate; via pyruvic acid; for decarboxylase activity is S378. At S378 the chain carries Pyruvic acid (Ser); by autocatalysis.

It belongs to the phosphatidylserine decarboxylase family. PSD-B subfamily. Eukaryotic type I sub-subfamily. As to quaternary structure, heterodimer of a large membrane-associated beta subunit and a small pyruvoyl-containing alpha subunit. Pyruvate serves as cofactor. Post-translationally, is synthesized initially as an inactive proenzyme. Formation of the active enzyme involves a self-maturation process in which the active site pyruvoyl group is generated from an internal serine residue via an autocatalytic post-translational modification. Two non-identical subunits are generated from the proenzyme in this reaction, and the pyruvate is formed at the N-terminus of the alpha chain, which is derived from the carboxyl end of the proenzyme. The autoendoproteolytic cleavage occurs by a canonical serine protease mechanism, in which the side chain hydroxyl group of the serine supplies its oxygen atom to form the C-terminus of the beta chain, while the remainder of the serine residue undergoes an oxidative deamination to produce ammonia and the pyruvoyl prosthetic group on the alpha chain. During this reaction, the Ser that is part of the protease active site of the proenzyme becomes the pyruvoyl prosthetic group, which constitutes an essential element of the active site of the mature decarboxylase.

The protein localises to the mitochondrion inner membrane. It is found in the cytoplasm. The protein resides in the lipid droplet. The enzyme catalyses a 1,2-diacyl-sn-glycero-3-phospho-L-serine + H(+) = a 1,2-diacyl-sn-glycero-3-phosphoethanolamine + CO2. Its pathway is phospholipid metabolism; phosphatidylethanolamine biosynthesis. In terms of biological role, catalyzes the formation of phosphatidylethanolamine (PtdEtn) from phosphatidylserine (PtdSer). Plays a central role in phospholipid metabolism and in the interorganelle trafficking of phosphatidylserine. May be involved in lipid droplet biogenesis at the endoplasmic reticulum membrane. This Homo sapiens (Human) protein is Phosphatidylserine decarboxylase proenzyme, mitochondrial.